A 303-amino-acid polypeptide reads, in one-letter code: N-acetyl-D-glucosamine kinase (303 aa).

Residues 4 to 11 and 133 to 140 contribute to the ATP site; these read GFDIGGTK and GVGGGLIF. Histidine 157, cysteine 177, cysteine 179, and cysteine 184 together coordinate Zn(2+).

The protein belongs to the ROK (NagC/XylR) family. NagK subfamily.

It carries out the reaction N-acetyl-D-glucosamine + ATP = N-acetyl-D-glucosamine 6-phosphate + ADP + H(+). It functions in the pathway cell wall biogenesis; peptidoglycan recycling. Catalyzes the phosphorylation of N-acetyl-D-glucosamine (GlcNAc) derived from cell-wall degradation, yielding GlcNAc-6-P. This is N-acetyl-D-glucosamine kinase from Escherichia fergusonii (strain ATCC 35469 / DSM 13698 / CCUG 18766 / IAM 14443 / JCM 21226 / LMG 7866 / NBRC 102419 / NCTC 12128 / CDC 0568-73).